The primary structure comprises 427 residues: WD repeat and SOCS box-containing protein 1 (427 aa).

WD repeat units lie at residues 129 to 170 (SRSI…LLLN), 173 to 213 (DHTD…NMVK), 217 to 256 (GHPNRVYSSAFSPDSSVLCSVGASKAVLLWNMDKYTLIRK), 259 to 298 (GHHNDVVSCEFSPDGALLATASYDTRVIVWDHQRGSILLE), and 314 to 353 (ANDRWVRSVSFCADGRHIASVSDDRLVRFWSIEERAPQAV). Residues 379–427 (SVHFWECPRSIASLQHLCRMALRRVKTTQQVEALPVPMPLRDFLTYRVV) enclose the SOCS box domain.

As to quaternary structure, component of a probable ECS E3 ubiquitin-protein ligase complex that contains the Elongin BC complex.

It participates in protein modification; protein ubiquitination. Probable substrate-recognition component of a SCF-like ECS (Elongin-Cullin-SOCS-box protein) E3 ubiquitin-protein ligase complex which mediates the ubiquitination and subsequent proteasomal degradation of target proteins. This Takifugu rubripes (Japanese pufferfish) protein is WD repeat and SOCS box-containing protein 1 (wsb1).